We begin with the raw amino-acid sequence, 288 residues long: Phenazine biosynthesis-like domain-containing protein 2 (288 aa).

Residue Glu-46 is part of the active site.

Belongs to the PhzF family.

The chain is Phenazine biosynthesis-like domain-containing protein 2 (Pbld2) from Mus musculus (Mouse).